The sequence spans 415 residues: Arrestin red cell isoform 3 (415 aa).

The protein belongs to the arrestin family.

Its subcellular location is the cytoplasm. In Oncorhynchus mykiss (Rainbow trout), this protein is Arrestin red cell isoform 3.